A 555-amino-acid chain; its full sequence is uncharacterized protein (555 aa).

5 helical membrane passes run 13–30 (ALQAVVVLSLISAIGLGL), 35–57 (FWGVSLGVTFVFFAGILAGHFGL), 72–91 (LVIFVYSLGLQVGPGFFSSF), 98–120 (LNMLALAVVLLGTLLTVVASYAT), and 157–179 (TPALGCAVAYPMGVIGVILAVLL). 2 RCK C-terminal domains span residues 188–273 (EDLE…LFGE) and 282–366 (KEDI…VLGN). Helical transmembrane passes span 376 to 398 (LVVIFIGIVLGLALGAIPFSIPG), 408 to 430 (AGGPIIVGILLGTFGPRIHMITY), 437 to 459 (LMLRALGLSMYLACLGLDAGAHF), 469 to 491 (LLWIALGAGLTIIPTVLVGFVAF), 498 to 517 (FGSVSGMLCGSMANPMALNY), and 532 to 554 (ATVYPLCMFLRVIIAQVLLMFLL).

Belongs to the AAE transporter (TC 2.A.81) family.

Its subcellular location is the cell membrane. This is an uncharacterized protein from Bacteroides thetaiotaomicron (strain ATCC 29148 / DSM 2079 / JCM 5827 / CCUG 10774 / NCTC 10582 / VPI-5482 / E50).